Reading from the N-terminus, the 81-residue chain is ATP synthase subunit c (81 aa).

2 consecutive transmembrane segments (helical) span residues 5 to 25 and 57 to 77; these read IAAG…IGAG and VGLV…FVFA.

Belongs to the ATPase C chain family. F-type ATPases have 2 components, F(1) - the catalytic core - and F(0) - the membrane proton channel. F(1) has five subunits: alpha(3), beta(3), gamma(1), delta(1), epsilon(1). F(0) has three main subunits: a(1), b(2) and c(10-14). The alpha and beta chains form an alternating ring which encloses part of the gamma chain. F(1) is attached to F(0) by a central stalk formed by the gamma and epsilon chains, while a peripheral stalk is formed by the delta and b chains.

The protein resides in the cell membrane. Functionally, f(1)F(0) ATP synthase produces ATP from ADP in the presence of a proton or sodium gradient. F-type ATPases consist of two structural domains, F(1) containing the extramembraneous catalytic core and F(0) containing the membrane proton channel, linked together by a central stalk and a peripheral stalk. During catalysis, ATP synthesis in the catalytic domain of F(1) is coupled via a rotary mechanism of the central stalk subunits to proton translocation. Key component of the F(0) channel; it plays a direct role in translocation across the membrane. A homomeric c-ring of between 10-14 subunits forms the central stalk rotor element with the F(1) delta and epsilon subunits. This Mycolicibacterium gilvum (strain PYR-GCK) (Mycobacterium gilvum (strain PYR-GCK)) protein is ATP synthase subunit c.